Reading from the N-terminus, the 256-residue chain is Thiazole synthase (256 aa).

Lys96 serves as the catalytic Schiff-base intermediate with DXP. 1-deoxy-D-xylulose 5-phosphate contacts are provided by residues Gly157, 184–185 (AG), and 206–207 (NT).

This sequence belongs to the ThiG family. As to quaternary structure, homotetramer. Forms heterodimers with either ThiH or ThiS.

The protein resides in the cytoplasm. The enzyme catalyses [ThiS sulfur-carrier protein]-C-terminal-Gly-aminoethanethioate + 2-iminoacetate + 1-deoxy-D-xylulose 5-phosphate = [ThiS sulfur-carrier protein]-C-terminal Gly-Gly + 2-[(2R,5Z)-2-carboxy-4-methylthiazol-5(2H)-ylidene]ethyl phosphate + 2 H2O + H(+). It functions in the pathway cofactor biosynthesis; thiamine diphosphate biosynthesis. In terms of biological role, catalyzes the rearrangement of 1-deoxy-D-xylulose 5-phosphate (DXP) to produce the thiazole phosphate moiety of thiamine. Sulfur is provided by the thiocarboxylate moiety of the carrier protein ThiS. In vitro, sulfur can be provided by H(2)S. The sequence is that of Thiazole synthase from Brucella suis (strain ATCC 23445 / NCTC 10510).